The primary structure comprises 260 residues: Dof zinc finger protein DOF1.2 (260 aa).

Residues 38–92 form a Dof-type zinc finger; that stretch reads PACPRCASSNTKFCYYNNYSLSQPRYFCKGCRRYWTKGGSLRNIPVGGGCRKRSR. The Zn(2+) site is built by Cys-40, Cys-43, Cys-65, and Cys-68. Positions 83–124 are disordered; that stretch reads VGGGCRKRSRSRQNSHKRFGRNENRPDGLINQDDGFQSSPPG. Positions 87–101 are enriched in basic residues; that stretch reads CRKRSRSRQNSHKRF.

It is found in the nucleus. In terms of biological role, transcription factor that binds specifically to a 5'-AA[AG]G-3' consensus core sequence. The sequence is that of Dof zinc finger protein DOF1.2 (DOF1.2) from Arabidopsis thaliana (Mouse-ear cress).